The primary structure comprises 172 residues: Antibacterial protein PR-39 (172 aa).

A signal peptide spans M1 to A29. Q30 carries the pyrrolidone carboxylic acid modification. Positions Q30 to V130 are excised as a propeptide. The segment at D61–V80 is disordered. Cystine bridges form between C85–C96 and C107–C124. The interval V130 to R172 is disordered. Over residues P136–R172 the composition is skewed to pro residues. P169 is modified (proline amide).

The protein belongs to the cathelicidin family. Small intestine and bone marrow.

The protein localises to the secreted. Functionally, exerts a potent antimicrobial activity against both E.coli and B.megaterium. The protein is Antibacterial protein PR-39 (PR39) of Sus scrofa (Pig).